The chain runs to 203 residues: GTP cyclohydrolase-2 (203 aa).

49–53 (RIHSE) is a binding site for GTP. 3 residues coordinate Zn(2+): Cys54, Cys65, and Cys67. Residues Gln70, 92–94 (EGR), and Thr114 contribute to the GTP site. Residue Asp126 is the Proton acceptor of the active site. Catalysis depends on Arg128, which acts as the Nucleophile. Residues Thr149 and Lys154 each coordinate GTP.

This sequence belongs to the GTP cyclohydrolase II family. Requires Zn(2+) as cofactor.

The catalysed reaction is GTP + 4 H2O = 2,5-diamino-6-hydroxy-4-(5-phosphoribosylamino)-pyrimidine + formate + 2 phosphate + 3 H(+). It functions in the pathway cofactor biosynthesis; riboflavin biosynthesis; 5-amino-6-(D-ribitylamino)uracil from GTP: step 1/4. Catalyzes the conversion of GTP to 2,5-diamino-6-ribosylamino-4(3H)-pyrimidinone 5'-phosphate (DARP), formate and pyrophosphate. The chain is GTP cyclohydrolase-2 from Shewanella sp. (strain MR-4).